A 264-amino-acid chain; its full sequence is Indole-3-glycerol phosphate synthase (264 aa).

The protein belongs to the TrpC family.

It catalyses the reaction 1-(2-carboxyphenylamino)-1-deoxy-D-ribulose 5-phosphate + H(+) = (1S,2R)-1-C-(indol-3-yl)glycerol 3-phosphate + CO2 + H2O. It functions in the pathway amino-acid biosynthesis; L-tryptophan biosynthesis; L-tryptophan from chorismate: step 4/5. The chain is Indole-3-glycerol phosphate synthase from Xylella fastidiosa (strain 9a5c).